The chain runs to 376 residues: Putative C-mannosyltransferase DPY19L2P2 (376 aa).

Residue asparagine 32 is glycosylated (N-linked (GlcNAc...) asparagine). The next 6 helical transmembrane spans lie at alanine 52–isoleucine 72, leucine 107–leucine 127, alanine 154–isoleucine 174, isoleucine 182–methionine 202, leucine 233–leucine 253, and leucine 299–phenylalanine 319.

This sequence belongs to the dpy-19 family. As to expression, fibroblast, lung, lymphoblast, spleen and testis.

It localises to the membrane. Probable C-mannosyltransferase that mediates C-mannosylation of tryptophan residues on target proteins. This is Putative C-mannosyltransferase DPY19L2P2 (DPY19L2P2) from Homo sapiens (Human).